The sequence spans 76 residues: MAAEHNPNADIEALSYEEAREQLVAVVGKLEAGGASLEDSLALWERGEALARRCEEWLEGARKRLAAARNQAGPES.

This sequence belongs to the XseB family. As to quaternary structure, heterooligomer composed of large and small subunits.

The protein localises to the cytoplasm. It carries out the reaction Exonucleolytic cleavage in either 5'- to 3'- or 3'- to 5'-direction to yield nucleoside 5'-phosphates.. Its function is as follows. Bidirectionally degrades single-stranded DNA into large acid-insoluble oligonucleotides, which are then degraded further into small acid-soluble oligonucleotides. The protein is Exodeoxyribonuclease 7 small subunit of Arthrobacter sp. (strain FB24).